The following is a 376-amino-acid chain: Putative glutamate--cysteine ligase 2 (376 aa).

This sequence belongs to the glutamate--cysteine ligase type 2 family. YbdK subfamily.

The enzyme catalyses L-cysteine + L-glutamate + ATP = gamma-L-glutamyl-L-cysteine + ADP + phosphate + H(+). Functionally, ATP-dependent carboxylate-amine ligase which exhibits weak glutamate--cysteine ligase activity. This Mycobacterium bovis (strain ATCC BAA-935 / AF2122/97) protein is Putative glutamate--cysteine ligase 2.